The primary structure comprises 375 residues: Holliday junction branch migration complex subunit RuvB (375 aa).

A disordered region spans residues 1-50 (MAIVSSKSPDPAERRSQAKTKPSVSEPQDSLVRPQAAPEESQRPEDQIRP). A large ATPase domain (RuvB-L) region spans residues 13–209 (ERRSQAKTKP…FGLVQRLRFY (197 aa)). The span at 19 to 28 (KTKPSVSEPQ) shows a compositional bias: polar residues. Residues 40–49 (ESQRPEDQIR) are compositionally biased toward basic and acidic residues. ATP contacts are provided by residues Ile48, Arg49, Gly90, Lys93, Thr94, Thr95, 156–158 (EDF), Arg199, Tyr209, and Arg246. Residue Thr94 participates in Mg(2+) binding. A small ATPAse domain (RuvB-S) region spans residues 210–280 (EVEALTDIVQ…IAATALELYN (71 aa)). The head domain (RuvB-H) stretch occupies residues 283–375 (PCGLDWTDRR…LQQLLTEPET (93 aa)). DNA contacts are provided by Arg338 and Arg343.

Belongs to the RuvB family. As to quaternary structure, homohexamer. Forms an RuvA(8)-RuvB(12)-Holliday junction (HJ) complex. HJ DNA is sandwiched between 2 RuvA tetramers; dsDNA enters through RuvA and exits via RuvB. An RuvB hexamer assembles on each DNA strand where it exits the tetramer. Each RuvB hexamer is contacted by two RuvA subunits (via domain III) on 2 adjacent RuvB subunits; this complex drives branch migration. In the full resolvosome a probable DNA-RuvA(4)-RuvB(12)-RuvC(2) complex forms which resolves the HJ.

Its subcellular location is the cytoplasm. The catalysed reaction is ATP + H2O = ADP + phosphate + H(+). The RuvA-RuvB-RuvC complex processes Holliday junction (HJ) DNA during genetic recombination and DNA repair, while the RuvA-RuvB complex plays an important role in the rescue of blocked DNA replication forks via replication fork reversal (RFR). RuvA specifically binds to HJ cruciform DNA, conferring on it an open structure. The RuvB hexamer acts as an ATP-dependent pump, pulling dsDNA into and through the RuvAB complex. RuvB forms 2 homohexamers on either side of HJ DNA bound by 1 or 2 RuvA tetramers; 4 subunits per hexamer contact DNA at a time. Coordinated motions by a converter formed by DNA-disengaged RuvB subunits stimulates ATP hydrolysis and nucleotide exchange. Immobilization of the converter enables RuvB to convert the ATP-contained energy into a lever motion, pulling 2 nucleotides of DNA out of the RuvA tetramer per ATP hydrolyzed, thus driving DNA branch migration. The RuvB motors rotate together with the DNA substrate, which together with the progressing nucleotide cycle form the mechanistic basis for DNA recombination by continuous HJ branch migration. Branch migration allows RuvC to scan DNA until it finds its consensus sequence, where it cleaves and resolves cruciform DNA. The polypeptide is Holliday junction branch migration complex subunit RuvB (Synechococcus elongatus (strain ATCC 33912 / PCC 7942 / FACHB-805) (Anacystis nidulans R2)).